The following is a 428-amino-acid chain: Trigger factor (428 aa).

A PPIase FKBP-type domain is found at G163–P248.

The protein belongs to the FKBP-type PPIase family. Tig subfamily.

It is found in the cytoplasm. The enzyme catalyses [protein]-peptidylproline (omega=180) = [protein]-peptidylproline (omega=0). Functionally, involved in protein export. Acts as a chaperone by maintaining the newly synthesized protein in an open conformation. Functions as a peptidyl-prolyl cis-trans isomerase. This is Trigger factor from Alkaliphilus oremlandii (strain OhILAs) (Clostridium oremlandii (strain OhILAs)).